Here is a 50-residue protein sequence, read N- to C-terminus: Bacterioferritin (50 aa).

In terms of domain architecture, Ferritin-like diiron spans 1–50 (MKGDPKVIDYLNKALRHELTAINQYWLHYRLLDNWGIKDLAKKWRAESIE). E18 is a Fe cation binding site.

Belongs to the bacterioferritin family. Homooligomer of 24 subunits, arranged as 12 dimers, that are packed together to form an approximately spherical molecule with a central cavity, in which large amounts of iron can be deposited. The cofactor is heme b.

The catalysed reaction is 4 Fe(2+) + O2 + 4 H(+) = 4 Fe(3+) + 2 H2O. It carries out the reaction Fe(2+)(in) = Fe(2+)(out). In terms of biological role, iron-storage protein, whose ferroxidase center binds Fe(2+), oxidizes it using dioxygen to Fe(3+), and participates in the subsequent Fe(3+) oxide mineral core formation within the central cavity of the BFR protein shell. May act as one of the electron carriers in the reverse electron-transport system from cytochrome c-552 to NADP(+). The polypeptide is Bacterioferritin (bfr) (Nitrobacter winogradskyi (Nitrobacter agilis)).